The chain runs to 207 residues: Guanylate kinase (207 aa).

Positions 3–181 (GLLFVVSAAS…ALHDLESVIT (179 aa)) constitute a Guanylate kinase-like domain. 10–17 (AASGTGKT) contributes to the ATP binding site.

Belongs to the guanylate kinase family.

It localises to the cytoplasm. It carries out the reaction GMP + ATP = GDP + ADP. Its function is as follows. Essential for recycling GMP and indirectly, cGMP. This is Guanylate kinase from Acinetobacter baylyi (strain ATCC 33305 / BD413 / ADP1).